The following is a 309-amino-acid chain: Protease HtpX homolog (309 aa).

2 helical membrane-spanning segments follow: residues 7-27 and 28-48; these read AILL…IGGA and SGAM…YWNS. Histidine 130 is a Zn(2+) binding site. Residue glutamate 131 is part of the active site. Histidine 134 provides a ligand contact to Zn(2+). A run of 2 helical transmembrane segments spans residues 145–165 and 173–193; these read VTAT…FFGG and GLGV…AMLV. Glutamate 202 lines the Zn(2+) pocket.

The protein belongs to the peptidase M48B family. The cofactor is Zn(2+).

The protein localises to the cell inner membrane. The protein is Protease HtpX homolog of Rhodopseudomonas palustris (strain BisA53).